The primary structure comprises 70 residues: Large ribosomal subunit protein bL31 (70 aa).

This sequence belongs to the bacterial ribosomal protein bL31 family. Type A subfamily. As to quaternary structure, part of the 50S ribosomal subunit.

Its function is as follows. Binds the 23S rRNA. This chain is Large ribosomal subunit protein bL31, found in Mycoplasma mobile (strain ATCC 43663 / 163K / NCTC 11711) (Mesomycoplasma mobile).